The sequence spans 54 residues: Hemoglobin subunit omega (54 aa).

A Globin domain is found at 2–54 (HWTAEEKQIILAIWAKIDIEEAGAAALSRLLVVYPWTQRYFKNFGNLSSPTAI).

It belongs to the globin family.

Functionally, hemoglobin omega chain is an embryonic-type beta-type chain found in prenatal and neonatal marsupials. This Notamacropus eugenii (Tammar wallaby) protein is Hemoglobin subunit omega.